A 337-amino-acid polypeptide reads, in one-letter code: Leucine-rich repeat-containing protein 39 (337 aa).

9 LRR repeats span residues 84–105, 107–128, 130–152, 153–176, 177–198, 200–221, 223–244, 246–267, and 269–290; these read QLQE…IGRF, HLIV…IGLL, RLQE…SNCT, SLEK…SKLL, KLTH…VLDM, ALEW…LDRM, SLHT…IKNM, NLGT…MEEM, and NLRF…PPSD.

In terms of assembly, interacts with MYH7 (via C-terminus). Expressed in heart and skeletal muscle.

It localises to the cytoplasm. The protein localises to the myofibril. Its subcellular location is the sarcomere. It is found in the m line. In terms of biological role, component of the sarcomeric M-band which plays a role in myocyte response to biomechanical stress. May regulate expression of other M-band proteins via an SRF-dependent pathway. Important for normal contractile function in heart. This chain is Leucine-rich repeat-containing protein 39, found in Mus musculus (Mouse).